A 361-amino-acid chain; its full sequence is Free fatty acid receptor 4 (361 aa).

The Extracellular portion of the chain corresponds to Met1–Thr45. The N-linked (GlcNAc...) asparagine glycan is linked to Asn21. A helical membrane pass occupies residues Val46–Ala66. Residues Arg67–Leu77 are Cytoplasmic-facing. Residues Val78–Val98 form a helical membrane-spanning segment. Residues Arg99–His112 are Extracellular-facing. A disulfide bridge connects residues Cys111 and Cys194. Residues Leu113 to Ser133 traverse the membrane as a helical segment. At Leu134–Ala156 the chain is on the cytoplasmic side. A helical transmembrane segment spans residues Val157 to Phe177. Over Arg178 to Glu204 the chain is Extracellular. A helical transmembrane segment spans residues Ile205–Ile225. Residues Ser226–Leu268 lie on the Cytoplasmic side of the membrane. The helical transmembrane segment at Leu269–Ile289 threads the bilayer. Topologically, residues Gln290–Asp295 are extracellular. Residues Leu296 to Leu316 form a helical membrane-spanning segment. Over Asn317–Gly361 the chain is Cytoplasmic. Phosphothreonine is present on residues Thr347 and Thr349. Ser350, Ser357, and Ser360 each carry phosphoserine.

Belongs to the G-protein coupled receptor 1 family. As to quaternary structure, interacts (via C-terminus) with ARRB2 following LCFAs stimulation. Post-translationally, phosphorylated at two clusters of Ser and Thr residues located in the intracellular C-terminus. Prerequisite for FFAR4 internalization via an ARRB2-dependent pathway. As to expression, highly expressed in lung and colon.

Its subcellular location is the cell membrane. It localises to the endosome membrane. It is found in the lysosome membrane. The protein resides in the cell projection. The protein localises to the cilium membrane. In terms of biological role, G-protein-coupled receptor for long-chain fatty acids (LCFAs) with a major role in adipogenesis, energy metabolism and inflammation. Signals via G-protein and beta-arrestin pathways. LCFAs sensing initiates activation of phosphoinositidase C-linked G proteins GNAQ and GNA11 (G(q)/G(11)), inducing a variety of cellular responses via second messenger pathways such as intracellular calcium mobilization, modulation of cyclic adenosine monophosphate (cAMP) production, and mitogen-activated protein kinases (MAPKs). After LCFAs binding, associates with beta-arrestin ARRB2 that acts as an adapter protein coupling the receptor to specific downstream signaling pathways, as well as mediating receptor endocytosis. In response to dietary fats, plays an important role in the regulation of adipocyte proliferation and differentiation. Acts as a receptor for omega-3 polyunsaturated fatty acids (PUFAs) at primary cilium of perivascular preadipocytes, initiating an adipogenic program via cAMP and CTCF-dependent chromatin remodeling that ultimately results in transcriptional activation of adipogenic genes and cell cycle entry. Induces differentiation of brown and beige adipocytes probably via autocrine and endocrine functions of FGF21 hormone. Contributes to the thermogenic activation of brown adipose tissue and the browning of white adipose tissue. Activates brown adipocytes by initiating intracellular calcium signaling leading to mitochondrial depolarization and fission, and overall increased mitochondrial respiration. Consequently stimulates fatty acid uptake and oxidation in mitochondria together with UCP1-mediated thermogenic respiration, eventually reducing fat mass. Regulates bi-potential differentiation of bone marrow mesenchymal stem cells toward osteoblasts or adipocytes likely by up-regulating distinct integrins. In response to dietary fats regulates hormone secretion and appetite. Stimulates GIP and GLP1 secretion from enteroendocrine cells as well as GCG secretion in pancreatic alpha cells, thereby playing a role in the regulation of blood glucose levels. Negatively regulates glucose-induced SST secretion in pancreatic delta cells. Mediates LCFAs inhibition of GHRL secretion, an appetite-controlling hormone. In taste buds, contributes to sensing of dietary fatty acids by the gustatory system. During the inflammatory response, promotes anti-inflammatory M2 macrophage differentiation in adipose tissue. Mediates the anti-inflammatory effects of omega-3 PUFAs via inhibition of NLRP3 inflammasome activation. In this pathway, interacts with adapter protein ARRB2 and inhibits the priming step triggered by Toll-like receptors (TLRs) at the level of TAK1 and TAB1. Further inhibits the activation step when ARRB2 directly associates with NLRP3, leading to inhibition of pro-inflammatory cytokine release. Mediates LCFAs anti-apoptotic effects. This chain is Free fatty acid receptor 4 (FFAR4), found in Macaca fascicularis (Crab-eating macaque).